The following is a 561-amino-acid chain: Transmembrane protein 151B (561 aa).

Residues 1 to 10 (MSPPGSAAGE) are compositionally biased toward low complexity. A disordered region spans residues 1 to 42 (MSPPGSAAGESAGGGGGGGGSGVPEEPMASADEGPAREEQRP). The segment covering 11–22 (SAGGGGGGGGSG) has biased composition (gly residues). Transmembrane regions (helical) follow at residues 59–79 (CLLL…CHVT) and 106–126 (YVYI…VECW). A compositionally biased stretch (polar residues) spans 489 to 507 (VNEASCPTEQTRLSSQASM). Residues 489–523 (VNEASCPTEQTRLSSQASMRDNEEDEDEEEAGPPP) are disordered. The segment covering 510–519 (NEEDEDEEEA) has biased composition (acidic residues).

This sequence belongs to the TMEM151 family.

The protein resides in the membrane. This chain is Transmembrane protein 151B (Tmem151b), found in Mus musculus (Mouse).